The sequence spans 877 residues: Alanine--tRNA ligase (877 aa).

Positions 563, 567, 667, and 671 each coordinate Zn(2+).

Belongs to the class-II aminoacyl-tRNA synthetase family. Zn(2+) is required as a cofactor.

Its subcellular location is the cytoplasm. It carries out the reaction tRNA(Ala) + L-alanine + ATP = L-alanyl-tRNA(Ala) + AMP + diphosphate. In terms of biological role, catalyzes the attachment of alanine to tRNA(Ala) in a two-step reaction: alanine is first activated by ATP to form Ala-AMP and then transferred to the acceptor end of tRNA(Ala). Also edits incorrectly charged Ser-tRNA(Ala) and Gly-tRNA(Ala) via its editing domain. The polypeptide is Alanine--tRNA ligase (Cytophaga hutchinsonii (strain ATCC 33406 / DSM 1761 / CIP 103989 / NBRC 15051 / NCIMB 9469 / D465)).